We begin with the raw amino-acid sequence, 707 residues long: Phosphoprotein (707 aa).

The tract at residues 1-35 is N0 binding; the sequence is MDKLDLVNDGLDIIDFIQKNQKEIQKTYGRSSIQQ. Disordered stretches follow at residues 26–103, 193–229, 254–446, and 454–473; these read KTYG…EDPD, FVPK…PRGN, FAKS…AENV, and VTRN…SLDD. 2 stretches are compositionally biased toward polar residues: residues 28–37 and 77–96; these read YGRSSIQQPS and DLSS…SNTR. A Phosphoserine; by host modification is found at S257. The span at 296–317 shows a compositional bias: basic and acidic residues; sequence FPEKEETPDVRRKDSLMQDSCK. S350 carries the phosphoserine; by host modification. Residues 435–446 are compositionally biased toward polar residues; the sequence is NQESKSVTAENV. A multimerization region spans residues 473–578; it reads DKYIMPSDDF…LVSMMIMIPG (106 aa).

In terms of assembly, homotetramer. Interacts (via multimerization domain) with polymerase L; this interaction forms the polymerase L-P complex. Interacts (via N-terminus) with N0 (via Ncore); this interaction allows P to chaperon N0 to avoid N polymerization before encapsidation. Interacts (via C-terminus) with N-RNA template; this interaction positions the polymerase on the template for both transcription and replication.

Functionally, essential cofactor of the RNA polymerase L that plays a central role in the transcription and replication by forming the polymerase complex with RNA polymerase L and recruiting L to the genomic N-RNA template for RNA synthesis. Also plays a central role in the encapsidation of nascent RNA chains by forming the encapsidation complex with the nucleocapsid protein N (N-P complex). Acts as a chaperone for newly synthesized free N protein, so-called N0, allowing encapsidation of nascent RNA chains during replication. The nucleoprotein protein N prevents excessive phosphorylation of P, which leads to down-regulation of viral transcription/ replication. Participates, together with N, in the formation of viral factories (viroplasms), which are large inclusions in the host cytoplasm where replication takes place. The chain is Phosphoprotein (P/V/C) from Equus caballus (Horse).